The primary structure comprises 199 residues: NAD(P)H dehydrogenase (quinone) (199 aa).

Residues 4–190 enclose the Flavodoxin-like domain; sequence MLVLYYSAYG…DDARFQGRRV (187 aa). Residues 10–15 and 78–80 each bind FMN; these read SAYGHM and TRY. Y12 provides a ligand contact to NAD(+). W98 serves as a coordination point for substrate. FMN-binding positions include 113–119 and H134; that span reads STATQHG. The segment at 158 to 181 is disordered; it reads GAPYGMTTTADGDGSRQPSAQELD. A compositionally biased stretch (polar residues) spans 163–177; sequence MTTTADGDGSRQPSA.

The protein belongs to the WrbA family. FMN serves as cofactor.

The enzyme catalyses a quinone + NADH + H(+) = a quinol + NAD(+). It catalyses the reaction a quinone + NADPH + H(+) = a quinol + NADP(+). The protein is NAD(P)H dehydrogenase (quinone) of Brucella ovis (strain ATCC 25840 / 63/290 / NCTC 10512).